Reading from the N-terminus, the 471-residue chain is Alpha-galactosidase 6 (471 aa).

The signal sequence occupies residues 1-18 (MFAFYFLTACISLKGVFG). A disulfide bond links cysteine 42 and cysteine 74. Residues aspartate 72 and aspartate 73 each coordinate substrate. Asparagine 105 carries an N-linked (GlcNAc...) asparagine glycan. Cysteine 121 and cysteine 151 form a disulfide bridge. Lysine 147 provides a ligand contact to substrate. Residue aspartate 149 is the Nucleophile of the active site. Residue asparagine 175 is glycosylated (N-linked (GlcNAc...) asparagine). Arginine 205 provides a ligand contact to substrate. Residue aspartate 209 is the Proton donor of the active site. 2 disulfides stabilise this stretch: cysteine 221–cysteine 237 and cysteine 223–cysteine 230. Substrate is bound at residue glutamine 251. N-linked (GlcNAc...) asparagine glycosylation is found at asparagine 270, asparagine 370, asparagine 403, asparagine 422, asparagine 435, and asparagine 454.

It belongs to the glycosyl hydrolase 27 family. In terms of assembly, homotetramer.

The protein resides in the secreted. The catalysed reaction is Hydrolysis of terminal, non-reducing alpha-D-galactose residues in alpha-D-galactosides, including galactose oligosaccharides, galactomannans and galactolipids.. The sequence is that of Alpha-galactosidase 6 (MEL6) from Saccharomyces cerevisiae (Baker's yeast).